Reading from the N-terminus, the 303-residue chain is Taste receptor type 2 member 13 (303 aa).

Residues 1 to 7 are Extracellular-facing; sequence MKSALPS. A helical transmembrane segment spans residues 8 to 28; that stretch reads IFTLVIIAEFIIGNLSNGFIV. Topologically, residues 29-55 are cytoplasmic; that stretch reads LINCIDWVSKRELSSVDKLLIILAISR. Residues 56-76 traverse the membrane as a helical segment; the sequence is IGLIWEILVSWFLALHYLAIF. Residues 77 to 85 are Extracellular-facing; that stretch reads VSGTGLRIM. Residues 86-106 traverse the membrane as a helical segment; that stretch reads IFSWIVSNHFNLWLATILSIF. Topologically, residues 107–128 are cytoplasmic; that stretch reads YLLKIASFSSPAFLYLKWRVNK. The helical transmembrane segment at 129 to 149 threads the bilayer; sequence VILLILLGTLVFLFLNLIQIN. At 150–184 the chain is on the extracellular side; that stretch reads MHIKDWLDRYERNTTWNFSMSDFETFSVSVKFTMT. 2 N-linked (GlcNAc...) asparagine glycosylation sites follow: N162 and N166. A helical membrane pass occupies residues 185-205; sequence MFSLTPFTVAFISFLLLIFSL. Residues 206-232 are Cytoplasmic-facing; it reads QKHLQKMQLNYKGHRDPKTKVHTNALK. A helical transmembrane segment spans residues 233–253; sequence IVISFLLFYASFFLCVLXSWI. Residues 254-261 are Extracellular-facing; that stretch reads SELYQNTV. The helical transmembrane segment at 262-282 threads the bilayer; it reads IYMLCETIGVFYPSSHSFLLI. Residues 283–303 lie on the Cytoplasmic side of the membrane; sequence LGNAKLRQAFLLVAAKVWAKR.

Belongs to the G-protein coupled receptor T2R family.

The protein localises to the membrane. Its function is as follows. Receptor that may play a role in the perception of bitterness and is gustducin-linked. May play a role in sensing the chemical composition of the gastrointestinal content. The activity of this receptor may stimulate alpha gustducin, mediate PLC-beta-2 activation and lead to the gating of TRPM5. The chain is Taste receptor type 2 member 13 (TAS2R13) from Gorilla gorilla gorilla (Western lowland gorilla).